Reading from the N-terminus, the 251-residue chain is Hydroxyacylglutathione hydrolase (251 aa).

7 residues coordinate Zn(2+): His-53, His-55, Asp-57, His-58, His-110, Asp-127, and His-165.

It belongs to the metallo-beta-lactamase superfamily. Glyoxalase II family. In terms of assembly, monomer. Zn(2+) is required as a cofactor.

It catalyses the reaction an S-(2-hydroxyacyl)glutathione + H2O = a 2-hydroxy carboxylate + glutathione + H(+). It functions in the pathway secondary metabolite metabolism; methylglyoxal degradation; (R)-lactate from methylglyoxal: step 2/2. Its function is as follows. Thiolesterase that catalyzes the hydrolysis of S-D-lactoyl-glutathione to form glutathione and D-lactic acid. This chain is Hydroxyacylglutathione hydrolase, found in Escherichia coli O81 (strain ED1a).